The primary structure comprises 345 residues: Hemin transport protein HmuS (345 aa).

To Y.enterocolitica HemS.

Its function is as follows. Part of the binding-protein-dependent transport system for hemin. The sequence is that of Hemin transport protein HmuS (hmuS) from Yersinia pestis.